Consider the following 1288-residue polypeptide: Disease resistance protein RRS1 (1288 aa).

The TIR domain maps to 5–146 (EKDEEFVCIS…EIVRDVYETH (142 aa)). The important for interaction with RPS4 stretch occupies residues 25–26 (SH). The NB-ARC domain occupies 170 to 421 (IGIRCVGIWG…LLEGCGFFPH (252 aa)). 179–186 (GMPGIGKT) contacts ATP. 12 LRR repeats span residues 498–522 (SEEIEGLFLDTSNLRFDLQPSAFKN), 535–553 (NPEVHPVINFPTGSLHSLP), 554–575 (NELRLLHWENYPLKSLPQNFDP), 577–598 (HLVEINMPYSQLQKLWGGTKNL), 621–646 (AENLEVIDLQGCTRLQNFPAAGRLLR), 665–688 (PPNIEKLHLQGTGILALPVSTVKP), 697–720 (LTEIPGLSEELERLTSLLESNSSC), 740–764 (LPNMANLDLNVLDLSGCSSLNSIQG), 766–791 (PRFLKQLYLGGTAIREVPQLPQSLEI), 792–807 (LNAHGSCLRSLPNMAN), 808–829 (LEFLKVLDLSGCSELETIQGFP), and 830–852 (RNLKELYFAGTTLREVPQLPLSL). The Nuclear localization signal signature appears at 986-1003 (RKFHCWAPWQVVPKVRKD). The WRKY DNA-binding region spans 1202 to 1270 (IPAIDEGDLW…YLSEHNHPRP (69 aa)). The interval 1267-1288 (HPRPTKRKALADSTRSTSSSIC) is disordered. A compositionally biased stretch (polar residues) spans 1279-1288 (STRSTSSSIC).

Belongs to the disease resistance TIR-NB-LRR family. As to quaternary structure, interacts with PopP2, a R.solanacearum type III effector. Interacts with RPS4.

The protein localises to the nucleus. The protein resides in the cytoplasm. Transcription factor. Interacts specifically with the W box (5'-(T)TGAC[CT]-3'), a frequently occurring elicitor-responsive cis-acting element. Also acts as a disease resistance protein involved in resistance to fungal and bacterial pathogens, including R.solanacearum, P.syringae pv. tomato and C.higginsianum. Heterodimerization with RPS4 is required to form a functional complex to recognize AvrRps4 and PopP2. Contributes to temperature-conditioned RPS4 auto-immunity. This Arabidopsis thaliana (Mouse-ear cress) protein is Disease resistance protein RRS1.